An 81-amino-acid polypeptide reads, in one-letter code: Small ribosomal subunit protein bS20 (81 aa).

Residues 1-11 (MPNIKSQKKRV) are compositionally biased toward basic residues. Residues 1-20 (MPNIKSQKKRVLTNEKSRAS) form a disordered region.

Belongs to the bacterial ribosomal protein bS20 family.

Its function is as follows. Binds directly to 16S ribosomal RNA. The sequence is that of Small ribosomal subunit protein bS20 from Mesoplasma florum (strain ATCC 33453 / NBRC 100688 / NCTC 11704 / L1) (Acholeplasma florum).